A 363-amino-acid polypeptide reads, in one-letter code: Pyrimidine monooxygenase RutA (363 aa).

FMN-binding positions include 49–50 (IK), asparagine 115, glutamate 124, 140–141 (RY), and serine 190.

The protein belongs to the NtaA/SnaA/DszA monooxygenase family. RutA subfamily.

The enzyme catalyses uracil + FMNH2 + NADH + O2 = (Z)-3-ureidoacrylate + FMN + NAD(+) + H2O + H(+). It carries out the reaction thymine + FMNH2 + NADH + O2 = (Z)-2-methylureidoacrylate + FMN + NAD(+) + H2O + H(+). Functionally, catalyzes the pyrimidine ring opening between N-3 and C-4 by an unusual flavin hydroperoxide-catalyzed mechanism, adding oxygen atoms in the process to yield ureidoacrylate peracid, that immediately reacts with FMN forming ureidoacrylate and FMN-N(5)-oxide. The FMN-N(5)-oxide reacts spontaneously with NADH to produce FMN. Requires the flavin reductase RutF to regenerate FMN in vivo. This Escherichia coli O44:H18 (strain 042 / EAEC) protein is Pyrimidine monooxygenase RutA.